An 84-amino-acid polypeptide reads, in one-letter code: UPF0320 protein YNR077C (84 aa).

Belongs to the UPF0320 family.

In Saccharomyces cerevisiae (strain ATCC 204508 / S288c) (Baker's yeast), this protein is UPF0320 protein YNR077C.